The primary structure comprises 184 residues: Ribosome-recycling factor (184 aa).

Belongs to the RRF family.

It localises to the cytoplasm. Functionally, responsible for the release of ribosomes from messenger RNA at the termination of protein biosynthesis. May increase the efficiency of translation by recycling ribosomes from one round of translation to another. This Oleidesulfovibrio alaskensis (strain ATCC BAA-1058 / DSM 17464 / G20) (Desulfovibrio alaskensis) protein is Ribosome-recycling factor.